We begin with the raw amino-acid sequence, 265 residues long: MNYLVNYCKISFYFLMSISLSLFLISLKFLLTDLVYFIEWEILSLQSMSIVMTFLFDWMSLMFMSFVLLISSLVIFYSNQYMEEDYNINRFILLVLMFVMSMMMLIISPNLISILLGWDGLGLVSYCLVIYFQNVKSYNAGMLTALSNRIGDVALLLAIAWMLNYGSWNYIFYLDMMKNNIEMMIIGGLVMLAAMTKSAQIPFSSWLPAAMAAPTPVSALVHSSTLVTAGVYLLIRFNDVLMNWWMAQFLLLVSGLTMFMAGLGA.

8 consecutive transmembrane segments (helical) span residues 10-30 (ISFYFLMSISLSLFLISLKFL), 50-70 (IVMTFLFDWMSLMFMSFVLLI), 92-112 (ILLVLMFVMSMMMLIISPNLI), 113-133 (SILLGWDGLGLVSYCLVIYFQ), 153-173 (VALLLAIAWMLNYGSWNYIFY), 183-203 (MMIIGGLVMLAAMTKSAQIPF), 215-235 (TPVSALVHSSTLVTAGVYLLI), and 244-264 (WWMAQFLLLVSGLTMFMAGLG).

Belongs to the complex I subunit 5 family.

Its subcellular location is the mitochondrion inner membrane. The catalysed reaction is a ubiquinone + NADH + 5 H(+)(in) = a ubiquinol + NAD(+) + 4 H(+)(out). Core subunit of the mitochondrial membrane respiratory chain NADH dehydrogenase (Complex I) that is believed to belong to the minimal assembly required for catalysis. Complex I functions in the transfer of electrons from NADH to the respiratory chain. The immediate electron acceptor for the enzyme is believed to be ubiquinone. This is NADH-ubiquinone oxidoreductase chain 5 (ND5) from Anopheles quadriannulatus (Mosquito).